Here is a 185-residue protein sequence, read N- to C-terminus: Elongation factor P (185 aa).

It belongs to the elongation factor P family.

It is found in the cytoplasm. It functions in the pathway protein biosynthesis; polypeptide chain elongation. In terms of biological role, involved in peptide bond synthesis. Stimulates efficient translation and peptide-bond synthesis on native or reconstituted 70S ribosomes in vitro. Probably functions indirectly by altering the affinity of the ribosome for aminoacyl-tRNA, thus increasing their reactivity as acceptors for peptidyl transferase. In Caldicellulosiruptor bescii (strain ATCC BAA-1888 / DSM 6725 / KCTC 15123 / Z-1320) (Anaerocellum thermophilum), this protein is Elongation factor P.